The sequence spans 763 residues: C6 finger domain transcription factor hasF (763 aa).

The span at 1–20 shows a compositional bias: low complexity; sequence MDSTTSSSRFSVSSPQSGPS. Residues 1 to 25 form a disordered region; that stretch reads MDSTTSSSRFSVSSPQSGPSAGIQK. The segment at residues 34 to 61 is a DNA-binding region (zn(2)-C6 fungal-type); the sequence is CLTCRRRKVKCDHAQPVCTPCQRGGRVC. Disordered stretches follow at residues 68 to 91, 112 to 145, and 189 to 219; these read PVSQ…RSGQ, GGNM…PKCE, and DQSS…ESLT. A compositionally biased stretch (polar residues) spans 80–89; the sequence is SRVSRTNLRS. Residues 197–209 are compositionally biased toward pro residues; the sequence is DSPPSDQPTPPFP.

It is found in the nucleus. Functionally, transcription factor; part of the gene cluster that mediates the biosynthesis of hexadehydro-astechrome (HAS), a tryptophan-derived iron(III)-complex that acts as a virulence factor in infected mice. Does not regulate the expression of the HAS biosynthetic genes (at least under the growth conditions tested). This chain is C6 finger domain transcription factor hasF, found in Aspergillus fumigatus (strain CBS 144.89 / FGSC A1163 / CEA10) (Neosartorya fumigata).